We begin with the raw amino-acid sequence, 299 residues long: Coenzyme PQQ synthesis protein B (299 aa).

Belongs to the PqqB family.

It functions in the pathway cofactor biosynthesis; pyrroloquinoline quinone biosynthesis. In terms of biological role, may be involved in the transport of PQQ or its precursor to the periplasm. The sequence is that of Coenzyme PQQ synthesis protein B from Methylorubrum extorquens (strain ATCC 14718 / DSM 1338 / JCM 2805 / NCIMB 9133 / AM1) (Methylobacterium extorquens).